Reading from the N-terminus, the 680-residue chain is tRNA 5-methylaminomethyl-2-thiouridine biosynthesis bifunctional protein MnmC (680 aa).

The tRNA (mnm(5)s(2)U34)-methyltransferase stretch occupies residues 1–251 (MSQNHILPQN…KREMIAGTLT (251 aa)). The FAD-dependent cmnm(5)s(2)U34 oxidoreductase stretch occupies residues 277–680 (IGGGVASAAL…RLLKGKPLDI (404 aa)).

This sequence in the N-terminal section; belongs to the methyltransferase superfamily. tRNA (mnm(5)s(2)U34)-methyltransferase family. In the C-terminal section; belongs to the DAO family. FAD serves as cofactor.

The protein localises to the cytoplasm. It carries out the reaction 5-aminomethyl-2-thiouridine(34) in tRNA + S-adenosyl-L-methionine = 5-methylaminomethyl-2-thiouridine(34) in tRNA + S-adenosyl-L-homocysteine + H(+). In terms of biological role, catalyzes the last two steps in the biosynthesis of 5-methylaminomethyl-2-thiouridine (mnm(5)s(2)U) at the wobble position (U34) in tRNA. Catalyzes the FAD-dependent demodification of cmnm(5)s(2)U34 to nm(5)s(2)U34, followed by the transfer of a methyl group from S-adenosyl-L-methionine to nm(5)s(2)U34, to form mnm(5)s(2)U34. This is tRNA 5-methylaminomethyl-2-thiouridine biosynthesis bifunctional protein MnmC from Aliivibrio fischeri (strain ATCC 700601 / ES114) (Vibrio fischeri).